A 386-amino-acid chain; its full sequence is MNIHEYQGKAVLRSYGVSVPNGKVAFTVEEAVEAAKELGTDVCVEKAQIHAGGRGKAGGVKVAKNLDEVRTYAESILGTTLVTHQTGPEGKEVKRLLIEEGCDIKKEYYVGLVLDRATSQVVLMASEEGGTEIEEVAEKTPEKIFKEYIDPAVGLQGFQARRIAFNINIPKELVGQAVKFMMGLYRAFIEKDCSIAEINPLVTTGEGKVMALDAKLNFDSNALYRHKDILELRDLDEEDSKEIEASKYDLNYIPLDGNIGCMVNGAGLAMATMDIIKHYHGDPANFLDVGGGATAEKVTEAFKIILSDKNVKGIFVNIFGGIMKCDVIAEGVIEATKQVGLELPLVVRLEGTNVELGKKILNESGLNIVAAESMADGAQKIVSLVG.

The region spanning 9–244 is the ATP-grasp domain; sequence KAVLRSYGVS…LDEEDSKEIE (236 aa). Residues K46, 53-55, E99, C102, and E107 each bind ATP; that span reads GRG. The Mg(2+) site is built by N199 and D213. Substrate contacts are provided by residues N264 and 321-323; that span reads GIM.

This sequence belongs to the succinate/malate CoA ligase beta subunit family. In terms of assembly, heterotetramer of two alpha and two beta subunits. Requires Mg(2+) as cofactor.

It carries out the reaction succinate + ATP + CoA = succinyl-CoA + ADP + phosphate. The catalysed reaction is GTP + succinate + CoA = succinyl-CoA + GDP + phosphate. It participates in carbohydrate metabolism; tricarboxylic acid cycle; succinate from succinyl-CoA (ligase route): step 1/1. In terms of biological role, succinyl-CoA synthetase functions in the citric acid cycle (TCA), coupling the hydrolysis of succinyl-CoA to the synthesis of either ATP or GTP and thus represents the only step of substrate-level phosphorylation in the TCA. The beta subunit provides nucleotide specificity of the enzyme and binds the substrate succinate, while the binding sites for coenzyme A and phosphate are found in the alpha subunit. In Bacillus cereus (strain ATCC 14579 / DSM 31 / CCUG 7414 / JCM 2152 / NBRC 15305 / NCIMB 9373 / NCTC 2599 / NRRL B-3711), this protein is Succinate--CoA ligase [ADP-forming] subunit beta.